We begin with the raw amino-acid sequence, 660 residues long: Translation factor GUF1, mitochondrial (660 aa).

A mitochondrion-targeting transit peptide spans 1 to 42 (MRSCVRTASSVLQSWRAHTVLRNGCPLPSRTLERLPRLARSY). The region spanning 62 to 242 (ERYRNFCIVA…AVVEKIPAPV (181 aa)) is the tr-type G domain. GTP contacts are provided by residues 71-78 (AHVDHGKS), 135-139 (DTPGH), and 189-192 (NKVD).

The protein belongs to the TRAFAC class translation factor GTPase superfamily. Classic translation factor GTPase family. LepA subfamily.

It is found in the mitochondrion inner membrane. The catalysed reaction is GTP + H2O = GDP + phosphate + H(+). In terms of biological role, promotes mitochondrial protein synthesis. May act as a fidelity factor of the translation reaction, by catalyzing a one-codon backward translocation of tRNAs on improperly translocated ribosomes. Binds to mitochondrial ribosomes in a GTP-dependent manner. In Phaeosphaeria nodorum (strain SN15 / ATCC MYA-4574 / FGSC 10173) (Glume blotch fungus), this protein is Translation factor GUF1, mitochondrial.